The chain runs to 383 residues: Succinyl-diaminopimelate desuccinylase (383 aa).

Residue His68 participates in Zn(2+) binding. Asp70 is an active-site residue. Residue Asp100 participates in Zn(2+) binding. Glu130 serves as the catalytic Proton acceptor. Residues Glu131, Glu159, and His352 each contribute to the Zn(2+) site.

It belongs to the peptidase M20A family. DapE subfamily. As to quaternary structure, homodimer. The cofactor is Zn(2+). Co(2+) is required as a cofactor.

It catalyses the reaction N-succinyl-(2S,6S)-2,6-diaminopimelate + H2O = (2S,6S)-2,6-diaminopimelate + succinate. The protein operates within amino-acid biosynthesis; L-lysine biosynthesis via DAP pathway; LL-2,6-diaminopimelate from (S)-tetrahydrodipicolinate (succinylase route): step 3/3. Its function is as follows. Catalyzes the hydrolysis of N-succinyl-L,L-diaminopimelic acid (SDAP), forming succinate and LL-2,6-diaminopimelate (DAP), an intermediate involved in the bacterial biosynthesis of lysine and meso-diaminopimelic acid, an essential component of bacterial cell walls. This is Succinyl-diaminopimelate desuccinylase from Granulibacter bethesdensis (strain ATCC BAA-1260 / CGDNIH1).